We begin with the raw amino-acid sequence, 276 residues long: tRNA (guanine-N(7)-)-methyltransferase (276 aa).

Residues 1 to 23 (MRPDPAPLDPTDASPAQARRHQP) form a disordered region. Glu-103, Glu-128, Asp-155, and Asp-178 together coordinate S-adenosyl-L-methionine. Asp-178 is an active-site residue. Substrate contacts are provided by residues Lys-182, Asp-214, and 252 to 255 (TRYE).

The protein belongs to the class I-like SAM-binding methyltransferase superfamily. TrmB family.

It catalyses the reaction guanosine(46) in tRNA + S-adenosyl-L-methionine = N(7)-methylguanosine(46) in tRNA + S-adenosyl-L-homocysteine. It participates in tRNA modification; N(7)-methylguanine-tRNA biosynthesis. Functionally, catalyzes the formation of N(7)-methylguanine at position 46 (m7G46) in tRNA. The chain is tRNA (guanine-N(7)-)-methyltransferase from Cutibacterium acnes (strain DSM 16379 / KPA171202) (Propionibacterium acnes).